The sequence spans 262 residues: Acyl-[acyl-carrier-protein]--UDP-N-acetylglucosamine O-acyltransferase (262 aa).

Belongs to the transferase hexapeptide repeat family. LpxA subfamily. As to quaternary structure, homotrimer.

The protein resides in the cytoplasm. It carries out the reaction a (3R)-hydroxyacyl-[ACP] + UDP-N-acetyl-alpha-D-glucosamine = a UDP-3-O-[(3R)-3-hydroxyacyl]-N-acetyl-alpha-D-glucosamine + holo-[ACP]. The protein operates within glycolipid biosynthesis; lipid IV(A) biosynthesis; lipid IV(A) from (3R)-3-hydroxytetradecanoyl-[acyl-carrier-protein] and UDP-N-acetyl-alpha-D-glucosamine: step 1/6. Involved in the biosynthesis of lipid A, a phosphorylated glycolipid that anchors the lipopolysaccharide to the outer membrane of the cell. The sequence is that of Acyl-[acyl-carrier-protein]--UDP-N-acetylglucosamine O-acyltransferase from Pectobacterium carotovorum subsp. carotovorum (strain PC1).